A 360-amino-acid chain; its full sequence is Putative MSV199 domain-containing protein 212L (360 aa).

The stretch at 173 to 243 (FKEREAKLQI…KLETVTHKLG (71 aa)) forms a coiled coil.

The polypeptide is Putative MSV199 domain-containing protein 212L (Acheta domesticus (House cricket)).